The primary structure comprises 370 residues: 3-isopropylmalate dehydrogenase 1 (370 aa).

Substrate-binding residues include R98, R108, R136, and D227. 3 residues coordinate Mg(2+): D227, D251, and D255. Residue 289-301 (GSAPDIAGQGIAN) coordinates NAD(+).

This sequence belongs to the isocitrate and isopropylmalate dehydrogenases family. LeuB type 1 subfamily. Homodimer. Mg(2+) is required as a cofactor. Mn(2+) serves as cofactor.

It is found in the cytoplasm. It carries out the reaction (2R,3S)-3-isopropylmalate + NAD(+) = 4-methyl-2-oxopentanoate + CO2 + NADH. It functions in the pathway amino-acid biosynthesis; L-leucine biosynthesis; L-leucine from 3-methyl-2-oxobutanoate: step 3/4. Its function is as follows. Catalyzes the oxidation of 3-carboxy-2-hydroxy-4-methylpentanoate (3-isopropylmalate) to 3-carboxy-4-methyl-2-oxopentanoate. The product decarboxylates to 4-methyl-2 oxopentanoate. The sequence is that of 3-isopropylmalate dehydrogenase 1 from Bordetella bronchiseptica (strain ATCC BAA-588 / NCTC 13252 / RB50) (Alcaligenes bronchisepticus).